Here is a 339-residue protein sequence, read N- to C-terminus: Phosphate acyltransferase (339 aa).

It belongs to the PlsX family. As to quaternary structure, homodimer. Probably interacts with PlsY.

It localises to the cytoplasm. The enzyme catalyses a fatty acyl-[ACP] + phosphate = an acyl phosphate + holo-[ACP]. It participates in lipid metabolism; phospholipid metabolism. Catalyzes the reversible formation of acyl-phosphate (acyl-PO(4)) from acyl-[acyl-carrier-protein] (acyl-ACP). This enzyme utilizes acyl-ACP as fatty acyl donor, but not acyl-CoA. In Pasteurella multocida (strain Pm70), this protein is Phosphate acyltransferase.